The sequence spans 544 residues: Methionine--tRNA ligase (544 aa).

The short motif at 10–20 (PYANGSLHLGH) is the 'HIGH' region element. Residues cysteine 141, cysteine 144, cysteine 153, and cysteine 156 each coordinate Zn(2+). The 'KMSKS' region signature appears at 329 to 333 (KLSTS). Threonine 332 provides a ligand contact to ATP.

Belongs to the class-I aminoacyl-tRNA synthetase family. MetG type 1 subfamily. As to quaternary structure, monomer. It depends on Zn(2+) as a cofactor.

The protein resides in the cytoplasm. The catalysed reaction is tRNA(Met) + L-methionine + ATP = L-methionyl-tRNA(Met) + AMP + diphosphate. Is required not only for elongation of protein synthesis but also for the initiation of all mRNA translation through initiator tRNA(fMet) aminoacylation. This chain is Methionine--tRNA ligase, found in Bacillus cereus (strain Q1).